A 464-amino-acid chain; its full sequence is Trigger factor (464 aa).

One can recognise a PPIase FKBP-type domain in the interval 162-243 (GDFISIDLSA…VGTVKERELP (82 aa)). The disordered stretch occupies residues 435-464 (ELFGNGEAETEEAASTDEAASDSTESEDQK).

It belongs to the FKBP-type PPIase family. Tig subfamily.

The protein resides in the cytoplasm. It catalyses the reaction [protein]-peptidylproline (omega=180) = [protein]-peptidylproline (omega=0). Involved in protein export. Acts as a chaperone by maintaining the newly synthesized protein in an open conformation. Functions as a peptidyl-prolyl cis-trans isomerase. The polypeptide is Trigger factor (Rhodococcus jostii (strain RHA1)).